We begin with the raw amino-acid sequence, 407 residues long: Phosphopentomutase (407 aa).

Residues Asp10, Asp306, His311, Asp347, His348, and His359 each coordinate Mn(2+).

This sequence belongs to the phosphopentomutase family. It depends on Mn(2+) as a cofactor.

It localises to the cytoplasm. The enzyme catalyses 2-deoxy-alpha-D-ribose 1-phosphate = 2-deoxy-D-ribose 5-phosphate. The catalysed reaction is alpha-D-ribose 1-phosphate = D-ribose 5-phosphate. The protein operates within carbohydrate degradation; 2-deoxy-D-ribose 1-phosphate degradation; D-glyceraldehyde 3-phosphate and acetaldehyde from 2-deoxy-alpha-D-ribose 1-phosphate: step 1/2. Its function is as follows. Isomerase that catalyzes the conversion of deoxy-ribose 1-phosphate (dRib-1-P) and ribose 1-phosphate (Rib-1-P) to deoxy-ribose 5-phosphate (dRib-5-P) and ribose 5-phosphate (Rib-5-P), respectively. This is Phosphopentomutase from Cronobacter sakazakii (strain ATCC BAA-894) (Enterobacter sakazakii).